Consider the following 332-residue polypeptide: Glycerol-3-phosphate dehydrogenase [NAD(P)+] (332 aa).

3 residues coordinate NADPH: Trp-13, Lys-34, and Lys-108. 3 residues coordinate sn-glycerol 3-phosphate: Lys-108, Gly-136, and Ser-138. Ala-140 is an NADPH binding site. 5 residues coordinate sn-glycerol 3-phosphate: Lys-191, Asp-244, Ser-254, Arg-255, and Asn-256. Lys-191 serves as the catalytic Proton acceptor. Residue Arg-255 participates in NADPH binding. 2 residues coordinate NADPH: Val-279 and Glu-281.

Belongs to the NAD-dependent glycerol-3-phosphate dehydrogenase family.

Its subcellular location is the cytoplasm. It catalyses the reaction sn-glycerol 3-phosphate + NAD(+) = dihydroxyacetone phosphate + NADH + H(+). The enzyme catalyses sn-glycerol 3-phosphate + NADP(+) = dihydroxyacetone phosphate + NADPH + H(+). Its pathway is membrane lipid metabolism; glycerophospholipid metabolism. Its function is as follows. Catalyzes the reduction of the glycolytic intermediate dihydroxyacetone phosphate (DHAP) to sn-glycerol 3-phosphate (G3P), the key precursor for phospholipid synthesis. This chain is Glycerol-3-phosphate dehydrogenase [NAD(P)+], found in Francisella tularensis subsp. mediasiatica (strain FSC147).